Reading from the N-terminus, the 83-residue chain is Exodeoxyribonuclease 7 small subunit (83 aa).

It belongs to the XseB family. In terms of assembly, heterooligomer composed of large and small subunits.

It is found in the cytoplasm. The catalysed reaction is Exonucleolytic cleavage in either 5'- to 3'- or 3'- to 5'-direction to yield nucleoside 5'-phosphates.. Its function is as follows. Bidirectionally degrades single-stranded DNA into large acid-insoluble oligonucleotides, which are then degraded further into small acid-soluble oligonucleotides. The sequence is that of Exodeoxyribonuclease 7 small subunit from Rhodopseudomonas palustris (strain ATCC BAA-98 / CGA009).